Here is a 653-residue protein sequence, read N- to C-terminus: Macrolide export ATP-binding/permease protein MacB (653 aa).

The 239-residue stretch at 6-244 (LQLTRVTRRF…DAAPDASGGA (239 aa)) folds into the ABC transporter domain. 42–49 (GASGSGKS) is a binding site for ATP. A run of 4 helical transmembrane segments spans residues 278-298 (LLTM…VAIG), 526-546 (LTLL…IGVM), 587-607 (MGGA…SLFV), and 616-636 (AASI…FGFM).

The protein belongs to the ABC transporter superfamily. Macrolide exporter (TC 3.A.1.122) family. As to quaternary structure, homodimer.

The protein localises to the cell inner membrane. Its function is as follows. Non-canonical ABC transporter that contains transmembrane domains (TMD), which form a pore in the inner membrane, and an ATP-binding domain (NBD), which is responsible for energy generation. Confers resistance against macrolides. The chain is Macrolide export ATP-binding/permease protein MacB from Burkholderia pseudomallei (strain 1710b).